Here is a 233-residue protein sequence, read N- to C-terminus: Maternal B9.15 protein (233 aa).

Residues 135 to 165 (KATSDYHSGTSSDEEPTNKEPKTIPKVSNPN) are disordered.

The protein belongs to the BTG family.

In Xenopus laevis (African clawed frog), this protein is Maternal B9.15 protein.